We begin with the raw amino-acid sequence, 199 residues long: Pneumococcal vaccine antigen A homolog (199 aa).

The protein resides in the cell surface. In Streptococcus pyogenes serotype M1, this protein is Pneumococcal vaccine antigen A homolog (pvaA).